We begin with the raw amino-acid sequence, 285 residues long: Putative sugar uptake protein lmo0169 (285 aa).

10 helical membrane-spanning segments follow: residues 5–24 (IALI…SKIG), 31–48 (IIGT…VFIF), 53–71 (YTAT…WSLG), 84–106 (VSKT…GVFA), 116–135 (LVLG…LTSY), 151–173 (IITL…WFDI), 178–195 (AILP…LFSI), 207–226 (WLNM…LLFS), 232–254 (IATG…ILFL), and 263–282 (LILV…MIGI).

This sequence belongs to the GRP transporter (TC 2.A.7.5) family.

The protein resides in the cell membrane. This Listeria monocytogenes serovar 1/2a (strain ATCC BAA-679 / EGD-e) protein is Putative sugar uptake protein lmo0169.